Here is a 271-residue protein sequence, read N- to C-terminus: N-acetylaspartate synthetase (271 aa).

Residues 1 to 38 (MTYRGTRKSPCCSPPPRCGPPLPSGPAGSALGPPSSGA) are disordered. The span at 12-24 (CSPPPRCGPPLPS) shows a compositional bias: pro residues. The span at 25–37 (GPAGSALGPPSSG) shows a compositional bias: low complexity. The chain crosses the membrane as a helical span at residues 89–109 (VYAVIIIMCFVVTKSLLVTCC). Residues 115-258 (LGMRYYYSRK…HSLLERLFFQ (144 aa)) form the N-acetyltransferase domain.

This sequence belongs to the NAT8 family.

Its subcellular location is the cytoplasm. It is found in the microsome membrane. The protein resides in the mitochondrion membrane. It localises to the endoplasmic reticulum membrane. It catalyses the reaction L-aspartate + acetyl-CoA = N-acetyl-L-aspartate + CoA + H(+). In terms of biological role, catalyzes the synthesis of N-acetylaspartate acid (NAA) from L-aspartate and acetyl-CoA. This Xenopus tropicalis (Western clawed frog) protein is N-acetylaspartate synthetase (nat8l).